The chain runs to 156 residues: Small ribosomal subunit protein uS7 (156 aa).

It belongs to the universal ribosomal protein uS7 family. In terms of assembly, part of the 30S ribosomal subunit. Contacts proteins S9 and S11.

Its function is as follows. One of the primary rRNA binding proteins, it binds directly to 16S rRNA where it nucleates assembly of the head domain of the 30S subunit. Is located at the subunit interface close to the decoding center, probably blocks exit of the E-site tRNA. The chain is Small ribosomal subunit protein uS7 from Shewanella sediminis (strain HAW-EB3).